The sequence spans 498 residues: ADP,ATP carrier protein 1 (498 aa).

Residues Met-1 to Phe-33 are Cytoplasmic-facing. The chain crosses the membrane as a helical span at residues Met-34–Val-54. Cys-37 and Cys-85 are disulfide-bonded. At Thr-55–Thr-67 the chain is on the extracellular side. The chain crosses the membrane as a helical span at residues Tyr-68–Leu-88. Over Lys-89–Asn-92 the chain is Cytoplasmic. The helical transmembrane segment at Val-93–Tyr-113 threads the bilayer. Over Pro-114–Ser-147 the chain is Extracellular. The helical transmembrane segment at Phe-148–Trp-168 threads the bilayer. Over Gln-169 to Tyr-184 the chain is Cytoplasmic. The chain crosses the membrane as a helical span at residues Ser-185–Cys-205. At Leu-206–Lys-218 the chain is on the extracellular side. A helical transmembrane segment spans residues Phe-219–Trp-239. Residues Met-240 to Tyr-279 are Cytoplasmic-facing. The helical transmembrane segment at Val-280–Val-300 threads the bilayer. Residues Trp-301–Gly-320 lie on the Extracellular side of the membrane. The chain crosses the membrane as a helical span at residues Lys-321–Leu-341. At Arg-342–Thr-348 the chain is on the cytoplasmic side. Residues Ala-349–Phe-369 form a helical membrane-spanning segment. Over Phe-370–Thr-379 the chain is Extracellular. A helical transmembrane segment spans residues Gly-380–Leu-400. Residues Ser-401–Arg-438 are Cytoplasmic-facing. Position 436–442 (Gly-436–Ser-442) interacts with ATP. The chain crosses the membrane as a helical span at residues Phe-439–Gly-459. The Extracellular segment spans residues Phe-460–Pro-465. The helical transmembrane segment at Tyr-466–Asn-486 threads the bilayer. The Cytoplasmic portion of the chain corresponds to Lys-487–Lys-498.

It belongs to the ADP/ATP translocase tlc family.

It is found in the cell membrane. Provides the rickettsial cell with host ATP in exchange for rickettsial ADP. This is an obligate exchange system. This energy acquiring activity is an important component of rickettsial parasitism. The polypeptide is ADP,ATP carrier protein 1 (tlcA) (Rickettsia conorii (strain ATCC VR-613 / Malish 7)).